The sequence spans 446 residues: Exodeoxyribonuclease 7 large subunit (446 aa).

The protein belongs to the XseA family. Heterooligomer composed of large and small subunits.

The protein localises to the cytoplasm. The enzyme catalyses Exonucleolytic cleavage in either 5'- to 3'- or 3'- to 5'-direction to yield nucleoside 5'-phosphates.. In terms of biological role, bidirectionally degrades single-stranded DNA into large acid-insoluble oligonucleotides, which are then degraded further into small acid-soluble oligonucleotides. The sequence is that of Exodeoxyribonuclease 7 large subunit from Streptococcus agalactiae serotype Ia (strain ATCC 27591 / A909 / CDC SS700).